The following is a 243-amino-acid chain: 3-deoxy-manno-octulosonate cytidylyltransferase (243 aa).

Belongs to the KdsB family.

It localises to the cytoplasm. The catalysed reaction is 3-deoxy-alpha-D-manno-oct-2-ulosonate + CTP = CMP-3-deoxy-beta-D-manno-octulosonate + diphosphate. It participates in nucleotide-sugar biosynthesis; CMP-3-deoxy-D-manno-octulosonate biosynthesis; CMP-3-deoxy-D-manno-octulosonate from 3-deoxy-D-manno-octulosonate and CTP: step 1/1. Its pathway is bacterial outer membrane biogenesis; lipopolysaccharide biosynthesis. Functionally, activates KDO (a required 8-carbon sugar) for incorporation into bacterial lipopolysaccharide in Gram-negative bacteria. This Bartonella henselae (strain ATCC 49882 / DSM 28221 / CCUG 30454 / Houston 1) (Rochalimaea henselae) protein is 3-deoxy-manno-octulosonate cytidylyltransferase.